Here is a 296-residue protein sequence, read N- to C-terminus: Ribosomal RNA small subunit methyltransferase A (296 aa).

Asparagine 28, leucine 30, glycine 55, glutamate 77, aspartate 103, and asparagine 122 together coordinate S-adenosyl-L-methionine.

This sequence belongs to the class I-like SAM-binding methyltransferase superfamily. rRNA adenine N(6)-methyltransferase family. RsmA subfamily.

The protein resides in the cytoplasm. It carries out the reaction adenosine(1518)/adenosine(1519) in 16S rRNA + 4 S-adenosyl-L-methionine = N(6)-dimethyladenosine(1518)/N(6)-dimethyladenosine(1519) in 16S rRNA + 4 S-adenosyl-L-homocysteine + 4 H(+). In terms of biological role, specifically dimethylates two adjacent adenosines (A1518 and A1519) in the loop of a conserved hairpin near the 3'-end of 16S rRNA in the 30S particle. May play a critical role in biogenesis of 30S subunits. The chain is Ribosomal RNA small subunit methyltransferase A from Sinorhizobium fredii (strain NBRC 101917 / NGR234).